The sequence spans 177 residues: Large ribosomal subunit protein uL6 (177 aa).

This sequence belongs to the universal ribosomal protein uL6 family. In terms of assembly, part of the 50S ribosomal subunit.

In terms of biological role, this protein binds to the 23S rRNA, and is important in its secondary structure. It is located near the subunit interface in the base of the L7/L12 stalk, and near the tRNA binding site of the peptidyltransferase center. The sequence is that of Large ribosomal subunit protein uL6 from Haemophilus ducreyi (strain 35000HP / ATCC 700724).